Reading from the N-terminus, the 389-residue chain is tRNA-specific 2-thiouridylase MnmA (389 aa).

Residues 21–28 (AMSGGVDS) and L47 contribute to the ATP site. Residue C115 is the Nucleophile of the active site. C115 and C212 are joined by a disulfide. An ATP-binding site is contributed by G139. The segment at 162–164 (RDQ) is interaction with tRNA. The active-site Cysteine persulfide intermediate is the C212.

Belongs to the MnmA/TRMU family.

Its subcellular location is the cytoplasm. The catalysed reaction is S-sulfanyl-L-cysteinyl-[protein] + uridine(34) in tRNA + AH2 + ATP = 2-thiouridine(34) in tRNA + L-cysteinyl-[protein] + A + AMP + diphosphate + H(+). Catalyzes the 2-thiolation of uridine at the wobble position (U34) of tRNA, leading to the formation of s(2)U34. In Xanthobacter autotrophicus (strain ATCC BAA-1158 / Py2), this protein is tRNA-specific 2-thiouridylase MnmA.